Reading from the N-terminus, the 519-residue chain is 2-isopropylmalate synthase (519 aa).

One can recognise a Pyruvate carboxyltransferase domain in the interval V12–T274. Residues D21, H209, H211, and N245 each coordinate Mn(2+). Positions K398–S519 are regulatory domain.

Belongs to the alpha-IPM synthase/homocitrate synthase family. LeuA type 1 subfamily. In terms of assembly, homodimer. Mn(2+) serves as cofactor.

The protein resides in the cytoplasm. It carries out the reaction 3-methyl-2-oxobutanoate + acetyl-CoA + H2O = (2S)-2-isopropylmalate + CoA + H(+). The protein operates within amino-acid biosynthesis; L-leucine biosynthesis; L-leucine from 3-methyl-2-oxobutanoate: step 1/4. Catalyzes the condensation of the acetyl group of acetyl-CoA with 3-methyl-2-oxobutanoate (2-ketoisovalerate) to form 3-carboxy-3-hydroxy-4-methylpentanoate (2-isopropylmalate). This is 2-isopropylmalate synthase from Nitrobacter winogradskyi (strain ATCC 25391 / DSM 10237 / CIP 104748 / NCIMB 11846 / Nb-255).